The chain runs to 702 residues: Rho GTPase-activating protein 22 (702 aa).

The region spanning 43-151 (PVLKAGWLRK…WVQAIRRVIW (109 aa)) is the PH domain. In terms of domain architecture, Rho-GAP spans 161–355 (QRLEDTVHHE…VLIRKHGQLF (195 aa)). Disordered regions lie at residues 360–433 (LEEP…HTLP), 438–457 (SFRQ…SSLE), 480–511 (RASS…FSST), and 555–596 (PSPL…TQAH). Phosphoserine occurs at positions 365 and 397. 4 stretches are compositionally biased toward polar residues: residues 407 to 421 (SRTS…TGPA), 438 to 456 (SFRQ…NSSL), 491 to 504 (GSAQ…NVPP), and 581 to 594 (SGSS…SPTQ). Positions 594–691 (QAHVRRCRAL…EEFFSTLGSL (98 aa)) form a coiled coil.

Interacts with VEZF1. As to expression, predominantly present in endothelial cells (at protein level).

It localises to the cytoplasm. Its subcellular location is the nucleus. Rho GTPase-activating protein involved in the signal transduction pathway that regulates endothelial cell capillary tube formation during angiogenesis. Acts as a GTPase activator for the RAC1 by converting it to an inactive GDP-bound state. Inhibits RAC1-dependent lamellipodia formation. May also play a role in transcription regulation via its interaction with VEZF1, by regulating activity of the endothelin-1 (EDN1) promoter. This Mus musculus (Mouse) protein is Rho GTPase-activating protein 22 (Arhgap22).